The sequence spans 1053 residues: Mediator of RNA polymerase II transcription subunit 16 (1053 aa).

The interval 139 to 170 is disordered; sequence KTEGNTEKNKDTKQIGNGSGTNGHGDSPINTP. Residues 142-151 show a composition bias toward basic and acidic residues; sequence GNTEKNKDTK.

The protein belongs to the Mediator complex subunit 16 family. As to quaternary structure, component of the Mediator complex.

Its subcellular location is the nucleus. Functionally, component of the Mediator complex, a coactivator involved in the regulated transcription of nearly all RNA polymerase II-dependent genes. Mediator functions as a bridge to convey information from gene-specific regulatory proteins to the basal RNA polymerase II transcription machinery. Mediator is recruited to promoters by direct interactions with regulatory proteins and serves as a scaffold for the assembly of a functional preinitiation complex with RNA polymerase II and the general transcription factors. This chain is Mediator of RNA polymerase II transcription subunit 16 (SIN4), found in Candida albicans (strain SC5314 / ATCC MYA-2876) (Yeast).